The following is a 203-amino-acid chain: Ras-related protein Rab-30 (203 aa).

Positions 20, 21, 22, 23, 24, and 41 each coordinate GTP. Thr23 serves as a coordination point for Mg(2+). The tract at residues 36–44 is switch-I; the sequence is PGQGATIGV. Mg(2+)-binding residues include Thr41 and Asp64. 6 residues coordinate GTP: Gly67, Asn122, Lys123, Asp125, Ala153, and Lys154. The tract at residues 67 to 83 is switch-II; the sequence is GQERFRSITQSYYRSAN. 2 S-geranylgeranyl cysteine lipidation sites follow: Cys199 and Cys200. Residue Cys200 is modified to Cysteine methyl ester. Residues 201-203 constitute a propeptide, removed in mature form; it reads NFN.

It belongs to the small GTPase superfamily. Rab family. It depends on Mg(2+) as a cofactor.

The protein resides in the membrane. It is found in the golgi apparatus. The protein localises to the trans-Golgi network membrane. It localises to the cis-Golgi network membrane. Its subcellular location is the golgi apparatus membrane. The protein resides in the cytoplasm. It is found in the cytoplasmic vesicle. The protein localises to the autophagosome membrane. It localises to the autolysosome membrane. The catalysed reaction is GTP + H2O = GDP + phosphate + H(+). Its activity is regulated as follows. Regulated by guanine nucleotide exchange factors (GEFs) which promote the exchange of bound GDP for free GTP. Regulated by GTPase activating proteins (GAPs) which increase the GTP hydrolysis activity. Inhibited by GDP dissociation inhibitors (GDIs). Functionally, the small GTPases Rab are key regulators of intracellular membrane trafficking, from the formation of transport vesicles to their fusion with membranes. Rabs cycle between an inactive GDP-bound form and an active GTP-bound form that is able to recruit to membranes different sets of downstream effectors directly responsible for vesicle formation, movement, tethering and fusion. RAB30 is required for maintaining the structural integrity of the Golgi apparatus, possibly by mediating interactions with cytoplasmic scaffolding proteins. Facilitates lipid homeostasis during fasting by regulating hepatic protein and lipid trafficking in a PPAR-alpha-dependent manner. Promotes autophagosome biogenesis during bacterial infection such as group A Streptococcus infection. The polypeptide is Ras-related protein Rab-30 (RAB30) (Bos taurus (Bovine)).